The chain runs to 35 residues: Dolichyl-diphosphooligosaccharide--protein glycosyltransferase subunit 4C (35 aa).

Residues 1–8 (MFDDQDLG) lie on the Lumenal side of the membrane. A helical transmembrane segment spans residues 9–29 (FFANFLGIFIFILVIAYHFVM). Residues 30–35 (ADPKFE) lie on the Cytoplasmic side of the membrane.

The protein belongs to the OST4 family. Component of the oligosaccharyltransferase (OST) complex.

It localises to the endoplasmic reticulum membrane. Functionally, subunit of the oligosaccharyl transferase (OST) complex that catalyzes the initial transfer of a defined glycan (Glc(3)Man(9)GlcNAc(2) in eukaryotes) from the lipid carrier dolichol-pyrophosphate to an asparagine residue within an Asn-X-Ser/Thr consensus motif in nascent polypeptide chains, the first step in protein N-glycosylation. N-glycosylation occurs cotranslationally and the complex associates with the Sec61 complex at the channel-forming translocon complex that mediates protein translocation across the endoplasmic reticulum (ER). All subunits are required for a maximal enzyme activity. The chain is Dolichyl-diphosphooligosaccharide--protein glycosyltransferase subunit 4C (OST4C) from Arabidopsis thaliana (Mouse-ear cress).